The sequence spans 289 residues: MKRIMLFLATNLAVVLVLSVVLNIVYAVTGMQPGSLSGLLVMAAVFGFGGAFISLMMSKGMALRSVGGMVIESPRNETEHWLLETVGRQAQQAGIGMPTVAIYEAADINAFATGAKRDDSLVAVSTGLLHNMTRDEAEAVLAHEVSHIANGDMVTMTLMQGVVNTFVIFLSRFIANIVASNDDEEGQGTNMMVYFGVSMVLELVFGFLASFLTMWYSRHREFHADAGAAQLVGKEKMIAALERLKMSHESQLDGTMMAFGINGKRSMTELLMSHPPLDKRISALRSQQY.

The next 2 helical transmembrane spans lie at isoleucine 4–isoleucine 24 and leucine 36–methionine 56. Position 143 (histidine 143) interacts with Zn(2+). The active site involves glutamate 144. Histidine 147 is a binding site for Zn(2+). 2 helical membrane-spanning segments follow: residues leucine 158–valine 178 and methionine 192–leucine 212. Glutamate 221 serves as a coordination point for Zn(2+).

Belongs to the peptidase M48B family. Requires Zn(2+) as cofactor.

The protein resides in the cell inner membrane. This chain is Protease HtpX, found in Vibrio campbellii (strain ATCC BAA-1116).